Here is a 385-residue protein sequence, read N- to C-terminus: Alanine--glyoxylate aminotransferase 1 (385 aa).

Residue K201 is modified to N6-(pyridoxal phosphate)lysine. R354 lines the substrate pocket.

It belongs to the class-V pyridoxal-phosphate-dependent aminotransferase family. As to quaternary structure, homodimer. It depends on pyridoxal 5'-phosphate as a cofactor.

The enzyme catalyses glyoxylate + L-alanine = glycine + pyruvate. It participates in amino-acid biosynthesis; glycine biosynthesis; glycine from glyoxylate: step 1/1. Functionally, has alanine:glyoxylate aminotransferase activity. In Saccharomyces cerevisiae (strain ATCC 204508 / S288c) (Baker's yeast), this protein is Alanine--glyoxylate aminotransferase 1.